The chain runs to 209 residues: PRA1 family protein B1 (209 aa).

Residue alanine 2 is modified to N-acetylalanine. 5 helical membrane passes run 73–93, 95–115, 133–153, 154–174, and 185–205; these read LAYFKVNYVAIVSLVLAFSLF, HPLSLLVLIGLLGGWMFLYLF, ETLLALVLSTIVVVFMTSVGS, LLTSALMIGVAIVCVHGAFVV, and PANAGLLSFLGGSATSAAAAV.

The protein belongs to the PRA1 family. As to quaternary structure, can form homodimer. Interacts with PRA1B2, PRA1B3, PRA1B4, PRA1B5, PRA1B6 and PRA1E.

It is found in the endosome membrane. Functionally, may be involved in both secretory and endocytic intracellular trafficking in the endosomal/prevacuolar compartments. This chain is PRA1 family protein B1 (PRA1B1), found in Arabidopsis thaliana (Mouse-ear cress).